Reading from the N-terminus, the 251-residue chain is Ubiquinone/menaquinone biosynthesis C-methyltransferase UbiE (251 aa).

S-adenosyl-L-methionine-binding positions include T74, D95, and 123–124 (DA).

The protein belongs to the class I-like SAM-binding methyltransferase superfamily. MenG/UbiE family.

It catalyses the reaction a 2-demethylmenaquinol + S-adenosyl-L-methionine = a menaquinol + S-adenosyl-L-homocysteine + H(+). The enzyme catalyses a 2-methoxy-6-(all-trans-polyprenyl)benzene-1,4-diol + S-adenosyl-L-methionine = a 5-methoxy-2-methyl-3-(all-trans-polyprenyl)benzene-1,4-diol + S-adenosyl-L-homocysteine + H(+). The protein operates within quinol/quinone metabolism; menaquinone biosynthesis; menaquinol from 1,4-dihydroxy-2-naphthoate: step 2/2. Its pathway is cofactor biosynthesis; ubiquinone biosynthesis. Its function is as follows. Methyltransferase required for the conversion of demethylmenaquinol (DMKH2) to menaquinol (MKH2) and the conversion of 2-polyprenyl-6-methoxy-1,4-benzoquinol (DDMQH2) to 2-polyprenyl-3-methyl-6-methoxy-1,4-benzoquinol (DMQH2). The chain is Ubiquinone/menaquinone biosynthesis C-methyltransferase UbiE from Idiomarina loihiensis (strain ATCC BAA-735 / DSM 15497 / L2-TR).